Reading from the N-terminus, the 138-residue chain is ATP synthase epsilon chain (138 aa).

The protein belongs to the ATPase epsilon chain family. As to quaternary structure, F-type ATPases have 2 components, CF(1) - the catalytic core - and CF(0) - the membrane proton channel. CF(1) has five subunits: alpha(3), beta(3), gamma(1), delta(1), epsilon(1). CF(0) has three main subunits: a, b and c.

It localises to the cell membrane. Produces ATP from ADP in the presence of a proton gradient across the membrane. The sequence is that of ATP synthase epsilon chain from Polynucleobacter asymbioticus (strain DSM 18221 / CIP 109841 / QLW-P1DMWA-1) (Polynucleobacter necessarius subsp. asymbioticus).